The sequence spans 347 residues: Farnesyl pyrophosphate synthase (347 aa).

Residues Lys-50, Arg-53, and Gln-88 each coordinate isopentenyl diphosphate. Asp-95 and Asp-99 together coordinate Mg(2+). Arg-104 is a dimethylallyl diphosphate binding site. Arg-105 contributes to the isopentenyl diphosphate binding site. The dimethylallyl diphosphate site is built by Lys-192, Thr-193, Gln-232, Lys-249, and Lys-258.

Belongs to the FPP/GGPP synthase family. Interacts with spo9. The cofactor is Mg(2+).

The protein resides in the cytoplasm. It is found in the nucleus. The enzyme catalyses isopentenyl diphosphate + dimethylallyl diphosphate = (2E)-geranyl diphosphate + diphosphate. The catalysed reaction is isopentenyl diphosphate + (2E)-geranyl diphosphate = (2E,6E)-farnesyl diphosphate + diphosphate. The protein operates within isoprenoid biosynthesis; farnesyl diphosphate biosynthesis; farnesyl diphosphate from geranyl diphosphate and isopentenyl diphosphate: step 1/1. Its pathway is isoprenoid biosynthesis; geranyl diphosphate biosynthesis; geranyl diphosphate from dimethylallyl diphosphate and isopentenyl diphosphate: step 1/1. Functionally, farnesyl pyrophosphate synthase; part of the second module of ergosterol biosynthesis pathway that includes the middle steps of the pathway. Fps1 catalyzes the sequential condensation of isopentenyl pyrophosphate with dimethylallyl pyrophosphate, and then with the resultant geranylpyrophosphate to the ultimate product farnesyl pyrophosphate. The second module is carried out in the vacuole and involves the formation of farnesyl diphosphate, which is also an important intermediate in the biosynthesis of ubiquinone, dolichol, heme and prenylated proteins. Activity by the mevalonate kinase erg12 first converts mevalonate into 5-phosphomevalonate. 5-phosphomevalonate is then further converted to 5-diphosphomevalonate by the phosphomevalonate kinase erg8. The diphosphomevalonate decarboxylase mvd1 then produces isopentenyl diphosphate. The isopentenyl-diphosphate delta-isomerase idi1 then catalyzes the 1,3-allylic rearrangement of the homoallylic substrate isopentenyl (IPP) to its highly electrophilic allylic isomer, dimethylallyl diphosphate (DMAPP). Finally the farnesyl diphosphate synthase fps1 catalyzes the sequential condensation of isopentenyl pyrophosphate with dimethylallyl pyrophosphate, and then with the resultant geranylpyrophosphate to the ultimate product farnesyl pyrophosphate. This Schizosaccharomyces pombe (strain 972 / ATCC 24843) (Fission yeast) protein is Farnesyl pyrophosphate synthase.